We begin with the raw amino-acid sequence, 782 residues long: Endonuclease MutS2 (782 aa).

Glycine 336–threonine 343 contributes to the ATP binding site. One can recognise a Smr domain in the interval leucine 707–lysine 782.

It belongs to the DNA mismatch repair MutS family. MutS2 subfamily. Homodimer. Binds to stalled ribosomes, contacting rRNA.

Endonuclease that is involved in the suppression of homologous recombination and thus may have a key role in the control of bacterial genetic diversity. Functionally, acts as a ribosome collision sensor, splitting the ribosome into its 2 subunits. Detects stalled/collided 70S ribosomes which it binds and splits by an ATP-hydrolysis driven conformational change. Acts upstream of the ribosome quality control system (RQC), a ribosome-associated complex that mediates the extraction of incompletely synthesized nascent chains from stalled ribosomes and their subsequent degradation. Probably generates substrates for RQC. In Staphylococcus carnosus (strain TM300), this protein is Endonuclease MutS2.